We begin with the raw amino-acid sequence, 212 residues long: Ribonuclease HII (212 aa).

Residues 22 to 211 (GLVAGVDEVG…VADRILLQNT (190 aa)) enclose the RNase H type-2 domain. 3 residues coordinate a divalent metal cation: Asp28, Glu29, and Asp120.

This sequence belongs to the RNase HII family. Mn(2+) serves as cofactor. It depends on Mg(2+) as a cofactor.

The protein resides in the cytoplasm. It carries out the reaction Endonucleolytic cleavage to 5'-phosphomonoester.. Endonuclease that specifically degrades the RNA of RNA-DNA hybrids. The polypeptide is Ribonuclease HII (Shewanella frigidimarina (strain NCIMB 400)).